The primary structure comprises 313 residues: Pyrimidine-specific ribonucleoside hydrolase RihB (313 aa).

Asp-11 functions as the Proton acceptor in the catalytic mechanism. Ca(2+) is bound by residues Asp-11, Asp-16, and Val-124. 2 residues coordinate substrate: Gln-227 and His-239. Asp-240 contacts Ca(2+).

This sequence belongs to the IUNH family. RihB subfamily. In terms of assembly, homotetramer. It depends on Ca(2+) as a cofactor.

It carries out the reaction a pyrimidine ribonucleoside + H2O = a pyrimidine nucleobase + D-ribose. In terms of biological role, hydrolyzes cytidine or uridine to ribose and cytosine or uracil, respectively. Has a clear preference for cytidine over uridine. Strictly specific for ribonucleosides. This chain is Pyrimidine-specific ribonucleoside hydrolase RihB, found in Escherichia coli O1:K1 / APEC.